We begin with the raw amino-acid sequence, 316 residues long: KRR1 small subunit processome component (316 aa).

A KH domain is found at Ala122 to Lys192. The segment covering Lys279 to Ile304 has biased composition (basic and acidic residues). Residues Lys279–Asn316 are disordered.

It belongs to the KRR1 family. Component of the ribosomal small subunit (SSU) processome composed of at least 40 protein subunits and snoRNA U3. Interacts with snoRNA U3. Interacts with MPP10, KRI1 and with ribosomal proteins RPS1A, RPS4A, RPS4B, RPS8A, RPS8B, RPS11A, RPS11B, RPS13, RPS24, RPS25, RPL4A, RPL7B, RPL8, RPL23, RPL25 and RPL28.

It is found in the nucleus. Its subcellular location is the nucleolus. In terms of biological role, required for 40S ribosome biogenesis. Involved in nucleolar processing of pre-18S ribosomal RNA and ribosome assembly. Essential for vegetative growth. The polypeptide is KRR1 small subunit processome component (Saccharomyces cerevisiae (strain RM11-1a) (Baker's yeast)).